The following is a 363-amino-acid chain: tRNA/tmRNA (uracil-C(5))-methyltransferase (363 aa).

5 residues coordinate S-adenosyl-L-methionine: Gln-187, Tyr-215, Asn-220, Glu-236, and Asp-296. Cys-321 (nucleophile) is an active-site residue. Residue Glu-355 is the Proton acceptor of the active site.

It belongs to the class I-like SAM-binding methyltransferase superfamily. RNA M5U methyltransferase family. TrmA subfamily.

It catalyses the reaction uridine(54) in tRNA + S-adenosyl-L-methionine = 5-methyluridine(54) in tRNA + S-adenosyl-L-homocysteine + H(+). It carries out the reaction uridine(341) in tmRNA + S-adenosyl-L-methionine = 5-methyluridine(341) in tmRNA + S-adenosyl-L-homocysteine + H(+). In terms of biological role, dual-specificity methyltransferase that catalyzes the formation of 5-methyluridine at position 54 (m5U54) in all tRNAs, and that of position 341 (m5U341) in tmRNA (transfer-mRNA). The sequence is that of tRNA/tmRNA (uracil-C(5))-methyltransferase from Pseudomonas aeruginosa (strain UCBPP-PA14).